The chain runs to 482 residues: Putative dipeptidase NECHADRAFT_87110 (482 aa).

Residues 1–21 show a composition bias toward polar residues; sequence MADTQTPNLQNTAEGDANTSA. Residues 1–24 are disordered; the sequence is MADTQTPNLQNTAEGDANTSAENE. Asn-18 carries N-linked (GlcNAc...) asparagine glycosylation. A helical transmembrane segment spans residues 41 to 61; it reads WLRYPFLVAGIALFLGPFSFF. Zn(2+)-binding residues include His-90, Asp-92, and Glu-201. A disulfide bridge connects residues Cys-141 and Cys-230. His-228 contacts substrate. Positions 272 and 293 each coordinate Zn(2+). Residues Arg-304 and Asp-364 each coordinate substrate.

The protein belongs to the metallo-dependent hydrolases superfamily. Peptidase M19 family. The cofactor is Zn(2+).

The protein resides in the membrane. The enzyme catalyses an L-aminoacyl-L-amino acid + H2O = 2 an L-alpha-amino acid. In terms of biological role, hydrolyzes a wide range of dipeptides. In Fusarium vanettenii (strain ATCC MYA-4622 / CBS 123669 / FGSC 9596 / NRRL 45880 / 77-13-4) (Fusarium solani subsp. pisi), this protein is Putative dipeptidase NECHADRAFT_87110.